We begin with the raw amino-acid sequence, 94 residues long: Large ribosomal subunit protein bL31 (94 aa).

The interval Tyr-65 to Ser-94 is disordered. The segment covering Ser-74–Ser-94 has biased composition (basic and acidic residues).

The protein belongs to the bacterial ribosomal protein bL31 family. Type A subfamily. Part of the 50S ribosomal subunit.

Functionally, binds the 23S rRNA. This chain is Large ribosomal subunit protein bL31, found in Prochlorococcus marinus (strain MIT 9211).